A 181-amino-acid chain; its full sequence is Peptidyl-tRNA hydrolase (181 aa).

Tyrosine 14 is a binding site for tRNA. The active-site Proton acceptor is the histidine 19. Residues tyrosine 62, asparagine 64, and asparagine 108 each contribute to the tRNA site.

It belongs to the PTH family. In terms of assembly, monomer.

It is found in the cytoplasm. It catalyses the reaction an N-acyl-L-alpha-aminoacyl-tRNA + H2O = an N-acyl-L-amino acid + a tRNA + H(+). Its function is as follows. Hydrolyzes ribosome-free peptidyl-tRNAs (with 1 or more amino acids incorporated), which drop off the ribosome during protein synthesis, or as a result of ribosome stalling. Functionally, catalyzes the release of premature peptidyl moieties from peptidyl-tRNA molecules trapped in stalled 50S ribosomal subunits, and thus maintains levels of free tRNAs and 50S ribosomes. This Campylobacter jejuni subsp. doylei (strain ATCC BAA-1458 / RM4099 / 269.97) protein is Peptidyl-tRNA hydrolase.